Reading from the N-terminus, the 184-residue chain is ATP synthase subunit delta (184 aa).

It belongs to the ATPase delta chain family. As to quaternary structure, F-type ATPases have 2 components, F(1) - the catalytic core - and F(0) - the membrane proton channel. F(1) has five subunits: alpha(3), beta(3), gamma(1), delta(1), epsilon(1). F(0) has three main subunits: a(1), b(2) and c(10-14). The alpha and beta chains form an alternating ring which encloses part of the gamma chain. F(1) is attached to F(0) by a central stalk formed by the gamma and epsilon chains, while a peripheral stalk is formed by the delta and b chains.

The protein localises to the cell membrane. Functionally, f(1)F(0) ATP synthase produces ATP from ADP in the presence of a proton or sodium gradient. F-type ATPases consist of two structural domains, F(1) containing the extramembraneous catalytic core and F(0) containing the membrane proton channel, linked together by a central stalk and a peripheral stalk. During catalysis, ATP synthesis in the catalytic domain of F(1) is coupled via a rotary mechanism of the central stalk subunits to proton translocation. In terms of biological role, this protein is part of the stalk that links CF(0) to CF(1). It either transmits conformational changes from CF(0) to CF(1) or is implicated in proton conduction. This is ATP synthase subunit delta from Rickettsia africae (strain ESF-5).